A 132-amino-acid polypeptide reads, in one-letter code: MGPRVLQPPLLLLLLALLLAALPCGAEEASPLRPAQVTLSPPPAVTNGSQPGAPHNSTHTRPPGASGSALTRSFYVILGFCGLTALYFLIRAFRLKKPQRRRYGLLANTEDPTEMASLDSDEETVFESRNLR.

The signal sequence occupies residues 1-26 (MGPRVLQPPLLLLLLALLLAALPCGA). The segment at 34–66 (PAQVTLSPPPAVTNGSQPGAPHNSTHTRPPGAS) is disordered. Positions 46–60 (TNGSQPGAPHNSTHT) are enriched in polar residues. A glycan (N-linked (GlcNAc...) asparagine) is linked at asparagine 47. A helical transmembrane segment spans residues 73–93 (SFYVILGFCGLTALYFLIRAF). Threonine 113 is modified (phosphothreonine). The interval 113–132 (TEMASLDSDEETVFESRNLR) is disordered. Residues serine 117 and serine 120 each carry the phosphoserine modification.

Belongs to the FAM174 family.

It is found in the membrane. The protein is Protein FAM174C of Homo sapiens (Human).